A 335-amino-acid chain; its full sequence is Holliday junction branch migration complex subunit RuvB (335 aa).

The tract at residues 4 to 184 is large ATPase domain (RuvB-L); the sequence is ADRIISGQAK…FGIVQRLEFY (181 aa). Residues Ile-23, Arg-24, Gly-65, Lys-68, Thr-69, Thr-70, 131 to 133, Arg-174, Tyr-184, and Arg-221 each bind ATP; that span reads EDY. Thr-69 contacts Mg(2+). Residues 185-255 form a small ATPAse domain (RuvB-S) region; that stretch reads SVEDLTSIVA…VAKQALSMLD (71 aa). Residues 258 to 335 form a head domain (RuvB-H) region; the sequence is DAGFDYLDRK…RHFGLQKLSD (78 aa). Residues Arg-294, Arg-313, and Arg-318 each coordinate DNA.

It belongs to the RuvB family. In terms of assembly, homohexamer. Forms an RuvA(8)-RuvB(12)-Holliday junction (HJ) complex. HJ DNA is sandwiched between 2 RuvA tetramers; dsDNA enters through RuvA and exits via RuvB. An RuvB hexamer assembles on each DNA strand where it exits the tetramer. Each RuvB hexamer is contacted by two RuvA subunits (via domain III) on 2 adjacent RuvB subunits; this complex drives branch migration. In the full resolvosome a probable DNA-RuvA(4)-RuvB(12)-RuvC(2) complex forms which resolves the HJ.

The protein resides in the cytoplasm. The catalysed reaction is ATP + H2O = ADP + phosphate + H(+). Its function is as follows. The RuvA-RuvB-RuvC complex processes Holliday junction (HJ) DNA during genetic recombination and DNA repair, while the RuvA-RuvB complex plays an important role in the rescue of blocked DNA replication forks via replication fork reversal (RFR). RuvA specifically binds to HJ cruciform DNA, conferring on it an open structure. The RuvB hexamer acts as an ATP-dependent pump, pulling dsDNA into and through the RuvAB complex. RuvB forms 2 homohexamers on either side of HJ DNA bound by 1 or 2 RuvA tetramers; 4 subunits per hexamer contact DNA at a time. Coordinated motions by a converter formed by DNA-disengaged RuvB subunits stimulates ATP hydrolysis and nucleotide exchange. Immobilization of the converter enables RuvB to convert the ATP-contained energy into a lever motion, pulling 2 nucleotides of DNA out of the RuvA tetramer per ATP hydrolyzed, thus driving DNA branch migration. The RuvB motors rotate together with the DNA substrate, which together with the progressing nucleotide cycle form the mechanistic basis for DNA recombination by continuous HJ branch migration. Branch migration allows RuvC to scan DNA until it finds its consensus sequence, where it cleaves and resolves cruciform DNA. This Haemophilus influenzae (strain PittEE) protein is Holliday junction branch migration complex subunit RuvB.